The sequence spans 316 residues: uncharacterized protein (316 aa).

Positions 16-89 (ERLDKFLARA…IPINIIYEDE (74 aa)) constitute an S4 RNA-binding domain. The active site involves Asp-140.

Belongs to the pseudouridine synthase RluA family.

It carries out the reaction a uridine in RNA = a pseudouridine in RNA. This is an uncharacterized protein from Aquifex aeolicus (strain VF5).